Consider the following 438-residue polypeptide: Rhomboid-related protein 1 (438 aa).

The interval 1–62 (MGRVEDGGTT…PSQPGPALWS (62 aa)) is disordered. Residues 8-17 (GTTEELEDWD) show a composition bias toward acidic residues. A run of 7 helical transmembrane segments spans residues 196–216 (PPVF…CYGA), 262–282 (GFNA…HGLL), 284–304 (ISLL…ITDM), 308–328 (VVGG…NVVM), 340–359 (LRMV…AVWL), 372–392 (PSFM…LTIL), and 405–425 (WWVV…WNVF). The active-site Nucleophile is Ser312. The active site involves His377.

Belongs to the peptidase S54 family. In terms of tissue distribution, detected in heart, brain, skeletal muscle and kidney.

Its subcellular location is the membrane. It carries out the reaction Cleaves type-1 transmembrane domains using a catalytic dyad composed of serine and histidine that are contributed by different transmembrane domains.. May be involved in regulated intramembrane proteolysis and the subsequent release of functional polypeptides from their membrane anchors. This chain is Rhomboid-related protein 1 (RHBDL1), found in Homo sapiens (Human).